The sequence spans 662 residues: Probable actin-related protein 8 (662 aa).

Basic and acidic residues-rich tracts occupy residues 50 to 59 and 67 to 77; these read AGEKDAKETE and TKQDDSKKSQV. The tract at residues 50 to 92 is disordered; sequence AGEKDAKETESESANGDTKQDDSKKSQVEEEEDGIEESELGEE. Residues 78–89 show a composition bias toward acidic residues; that stretch reads EEEEDGIEESEL. ATP is bound at residue 339–342; the sequence is DMGA.

This sequence belongs to the actin family. As to quaternary structure, component of the chromatin remodeling Ino80 complex. Exists as monomers and dimers, but the dimer is most probably the biologically relevant form required for stable interactions with histones that exploits the twofold symmetry of the nucleosome core.

The protein resides in the nucleus. In terms of biological role, probably involved in transcription regulation via its interaction with the INO80 complex, a chromatin remodeling complex. Exhibits low basal ATPase activity, and unable to polymerize. Strongly prefer nucleosomes and H3-H4 tetramers over H2A-H2B dimers, suggesting it may act as a nucleosome recognition module within the complex. This Schizosaccharomyces pombe (strain 972 / ATCC 24843) (Fission yeast) protein is Probable actin-related protein 8.